Reading from the N-terminus, the 547-residue chain is Cytochrome P450 78A1 (547 aa).

The span at 84–94 (ASSRCPGAAAP) shows a compositional bias: low complexity. A disordered region spans residues 84-104 (ASSRCPGAAAPRPRRDGPRRR). A heme-binding site is contributed by cysteine 490.

The protein belongs to the cytochrome P450 family. Heme serves as cofactor. As to expression, shoot apex.

This Zea mays (Maize) protein is Cytochrome P450 78A1 (CYP78A1).